The primary structure comprises 508 residues: Glucose-1-phosphate adenylyltransferase small subunit 1, chloroplastic (508 aa).

Positions 1–27 are disordered; it reads MSSIVTSGVINVPRSSSSSKNLSFSSS. Residues 1–59 constitute a chloroplast transit peptide; the sequence is MSSIVTSGVINVPRSSSSSKNLSFSSSSQLSGNKILTVSGNGAPRGRCTLKHVFLTPKA. Residues 15–27 are compositionally biased toward low complexity; the sequence is SSSSSKNLSFSSS.

This sequence belongs to the bacterial/plant glucose-1-phosphate adenylyltransferase family. As to quaternary structure, heterotetramer. Seeds.

Its subcellular location is the plastid. The protein localises to the chloroplast. It carries out the reaction alpha-D-glucose 1-phosphate + ATP + H(+) = ADP-alpha-D-glucose + diphosphate. Its pathway is glycan biosynthesis; starch biosynthesis. With respect to regulation, activated by 3'phosphoglycerate, inhibited by orthophosphate. Allosteric regulation. In terms of biological role, this protein plays a role in synthesis of starch. It catalyzes the synthesis of the activated glycosyl donor, ADP-glucose from Glc-1-P and ATP. This is Glucose-1-phosphate adenylyltransferase small subunit 1, chloroplastic (AGPC) from Vicia faba (Broad bean).